A 98-amino-acid chain; its full sequence is uncharacterized protein (98 aa).

This is an uncharacterized protein from Thermotoga maritima (strain ATCC 43589 / DSM 3109 / JCM 10099 / NBRC 100826 / MSB8).